The chain runs to 322 residues: UV DNA damage endonuclease (322 aa).

The protein belongs to the uve1/UvsE family.

Its function is as follows. Component in a DNA repair pathway. Removal of UV LIGHT damaged nucleotides. Recognizes pyrimidine dimers and cleave a phosphodiester bond immediately 5' to the lesion. The sequence is that of UV DNA damage endonuclease from Nostoc sp. (strain PCC 7120 / SAG 25.82 / UTEX 2576).